We begin with the raw amino-acid sequence, 124 residues long: Small ribosomal subunit protein uS12 (124 aa).

The tract at residues 105–124 (SGVNDRRQGRSKYGAKRPKS) is disordered. Over residues 113 to 124 (GRSKYGAKRPKS) the composition is skewed to basic residues.

It belongs to the universal ribosomal protein uS12 family. As to quaternary structure, part of the 30S ribosomal subunit. Contacts proteins S8 and S17. May interact with IF1 in the 30S initiation complex.

In terms of biological role, with S4 and S5 plays an important role in translational accuracy. Interacts with and stabilizes bases of the 16S rRNA that are involved in tRNA selection in the A site and with the mRNA backbone. Located at the interface of the 30S and 50S subunits, it traverses the body of the 30S subunit contacting proteins on the other side and probably holding the rRNA structure together. The combined cluster of proteins S8, S12 and S17 appears to hold together the shoulder and platform of the 30S subunit. The polypeptide is Small ribosomal subunit protein uS12 (Idiomarina loihiensis (strain ATCC BAA-735 / DSM 15497 / L2-TR)).